The following is a 379-amino-acid chain: Chaperone protein DnaJ (379 aa).

The region spanning 5 to 70 (DYYEVLGLSK…EKKAMYDQYG (66 aa)) is the J domain. The CR-type zinc finger occupies 136–214 (GCKKDIRIHT…CHGDGRVHKA (79 aa)). Residues Cys-149, Cys-152, Cys-166, Cys-169, Cys-188, Cys-191, Cys-202, and Cys-205 each contribute to the Zn(2+) site. 4 CXXCXGXG motif repeats span residues 149 to 156 (CDTCHGTG), 166 to 173 (CSHCHGSG), 188 to 195 (CPSCHGTG), and 202 to 209 (CRSCHGDG).

The protein belongs to the DnaJ family. In terms of assembly, homodimer. Requires Zn(2+) as cofactor.

It localises to the cytoplasm. In terms of biological role, participates actively in the response to hyperosmotic and heat shock by preventing the aggregation of stress-denatured proteins and by disaggregating proteins, also in an autonomous, DnaK-independent fashion. Unfolded proteins bind initially to DnaJ; upon interaction with the DnaJ-bound protein, DnaK hydrolyzes its bound ATP, resulting in the formation of a stable complex. GrpE releases ADP from DnaK; ATP binding to DnaK triggers the release of the substrate protein, thus completing the reaction cycle. Several rounds of ATP-dependent interactions between DnaJ, DnaK and GrpE are required for fully efficient folding. Also involved, together with DnaK and GrpE, in the DNA replication of plasmids through activation of initiation proteins. In Mannheimia haemolytica (Pasteurella haemolytica), this protein is Chaperone protein DnaJ.